A 785-amino-acid chain; its full sequence is Probable splicing factor 3A subunit 1 (785 aa).

Position 1 is an N-acetylmethionine (Met1). Residues 1–42 (MFSSMQILPLEAPPTDGKLGPLPPSQLTDQEVEERELQAEQN) are disordered. The stretch at 71–113 (IVEKTAQFVSKNGLEFEKRIIVSNEKNAKFNFLKSSDPYHAFY) is one SURP motif 1 repeat. A disordered region spans residues 124-175 (NKDGAQGTDDSDGTTDPQLDTGAADESEAGDTQPDLQAQFRIPSKPLEAPEP). Residues 193–235 (IIKLTAQFVARNGKSFLTGLSNRENNNPQFHFMKPTHSMFTFF) form an SURP motif 2 repeat. 2 disordered regions span residues 522–554 (NANG…GVPI) and 639–713 (RPYG…PNEN). 2 stretches are compositionally biased toward pro residues: residues 543 to 554 (AALPPPRPGVPI) and 653 to 674 (QPPP…PPLP). Residues 677-686 (PEAKRQKFDE) show a composition bias toward basic and acidic residues. Positions 707–782 (VSKPNENDGQ…LTLSLRERGG (76 aa)) constitute a Ubiquitin-like domain.

In terms of assembly, component of splicing factor SF3A which is composed of three subunits.

The protein localises to the nucleus. The chain is Probable splicing factor 3A subunit 1 from Arabidopsis thaliana (Mouse-ear cress).